The following is a 431-amino-acid chain: MLDIQLLRSNTAAVAERLAARGYEFDAARFNALEEQRKAVQVKTEELQASRNSISKQIGALKGQGKHEEAQAAMDQVAQIKTDLEQAAADLDAVQKELDAWLLSIPNLPHESVPAGKDETENVEVRKVGTPREFDFEIKDHVDLGEPLGLDFEGGAKLSGARFTVMRGQIARLHRALAQFMLDTHTLQHGYTEHYTPYIVDDTTLQGTGQLPKFAEDLFHVTRGGDETKTTQYLIPTAEVTLTNTVADSIIPSEQLPLKLTAHSPCFRSEAGSYGKDTRGLIRQHQFDKVEMVQIVHPEKSYETLEEMVGHAENILKALELPYRVITLCTGDMGFGAAKTYDLEVWVPAQNTYREISSCSNCEDFQARRMKARFKDENGKNRLVHTLNGSGLAVGRTLVAVLENHQNADGSINIPAALQPYMGGVAKLEVK.

237 to 239 is a binding site for L-serine; the sequence is TAE. 268 to 270 is an ATP binding site; the sequence is RSE. Glu291 contributes to the L-serine binding site. Residue 355–358 coordinates ATP; the sequence is EISS. Ser390 contacts L-serine.

It belongs to the class-II aminoacyl-tRNA synthetase family. Type-1 seryl-tRNA synthetase subfamily. Homodimer. The tRNA molecule binds across the dimer.

Its subcellular location is the cytoplasm. It catalyses the reaction tRNA(Ser) + L-serine + ATP = L-seryl-tRNA(Ser) + AMP + diphosphate + H(+). The enzyme catalyses tRNA(Sec) + L-serine + ATP = L-seryl-tRNA(Sec) + AMP + diphosphate + H(+). Its pathway is aminoacyl-tRNA biosynthesis; selenocysteinyl-tRNA(Sec) biosynthesis; L-seryl-tRNA(Sec) from L-serine and tRNA(Sec): step 1/1. In terms of biological role, catalyzes the attachment of serine to tRNA(Ser). Is also able to aminoacylate tRNA(Sec) with serine, to form the misacylated tRNA L-seryl-tRNA(Sec), which will be further converted into selenocysteinyl-tRNA(Sec). The protein is Serine--tRNA ligase of Neisseria meningitidis serogroup C (strain 053442).